Reading from the N-terminus, the 187-residue chain is Peptidyl-tRNA hydrolase (187 aa).

Position 14 (tyrosine 14) interacts with tRNA. Histidine 19 (proton acceptor) is an active-site residue. TRNA-binding residues include phenylalanine 60 and asparagine 62.

It belongs to the PTH family. As to quaternary structure, monomer.

It localises to the cytoplasm. The enzyme catalyses an N-acyl-L-alpha-aminoacyl-tRNA + H2O = an N-acyl-L-amino acid + a tRNA + H(+). Functionally, hydrolyzes ribosome-free peptidyl-tRNAs (with 1 or more amino acids incorporated), which drop off the ribosome during protein synthesis, or as a result of ribosome stalling. Its function is as follows. Catalyzes the release of premature peptidyl moieties from peptidyl-tRNA molecules trapped in stalled 50S ribosomal subunits, and thus maintains levels of free tRNAs and 50S ribosomes. The polypeptide is Peptidyl-tRNA hydrolase (Pseudothermotoga lettingae (strain ATCC BAA-301 / DSM 14385 / NBRC 107922 / TMO) (Thermotoga lettingae)).